Reading from the N-terminus, the 327-residue chain is ATPase GET3 (327 aa).

27-34 (KGGVGKTT) contacts ATP. Asp56 is a catalytic residue. ATP contacts are provided by Glu231 and Asn258. Residues Cys269 and Cys272 each coordinate Zn(2+).

Belongs to the arsA ATPase family. As to quaternary structure, homodimer. Component of the Golgi to ER traffic (GET) complex, which is composed of GET1, GET2 and GET3. Within the complex, GET1 and GET2 form a heterotetramer which is stabilized by phosphatidylinositol binding and which binds to the GET3 homodimer. Interacts with the chloride channel protein GEF1.

The protein localises to the cytoplasm. It is found in the endoplasmic reticulum. Its subcellular location is the golgi apparatus. Its function is as follows. ATPase required for the post-translational delivery of tail-anchored (TA) proteins to the endoplasmic reticulum. Recognizes and selectively binds the transmembrane domain of TA proteins in the cytosol. This complex then targets to the endoplasmic reticulum by membrane-bound receptors GET1 and GET2, where the tail-anchored protein is released for insertion. This process is regulated by ATP binding and hydrolysis. ATP binding drives the homodimer towards the closed dimer state, facilitating recognition of newly synthesized TA membrane proteins. ATP hydrolysis is required for insertion. Subsequently, the homodimer reverts towards the open dimer state, lowering its affinity for the GET1-GET2 receptor, and returning it to the cytosol to initiate a new round of targeting. Cooperates with the HDEL receptor ERD2 to mediate the ATP-dependent retrieval of resident ER proteins that contain a C-terminal H-D-E-L retention signal from the Golgi to the ER. Involved in low-level resistance to the oxyanions arsenite and arsenate, and in heat tolerance. The polypeptide is ATPase GET3 (Yarrowia lipolytica (strain CLIB 122 / E 150) (Yeast)).